Here is a 196-residue protein sequence, read N- to C-terminus: Imidazoleglycerol-phosphate dehydratase (196 aa).

The protein belongs to the imidazoleglycerol-phosphate dehydratase family.

The protein localises to the cytoplasm. It carries out the reaction D-erythro-1-(imidazol-4-yl)glycerol 3-phosphate = 3-(imidazol-4-yl)-2-oxopropyl phosphate + H2O. It participates in amino-acid biosynthesis; L-histidine biosynthesis; L-histidine from 5-phospho-alpha-D-ribose 1-diphosphate: step 6/9. In Ralstonia pickettii (strain 12J), this protein is Imidazoleglycerol-phosphate dehydratase.